A 191-amino-acid polypeptide reads, in one-letter code: Peptidyl-tRNA hydrolase (191 aa).

Tyr15 is a binding site for tRNA. His20 (proton acceptor) is an active-site residue. Positions 66, 68, and 114 each coordinate tRNA.

The protein belongs to the PTH family. As to quaternary structure, monomer.

It is found in the cytoplasm. The catalysed reaction is an N-acyl-L-alpha-aminoacyl-tRNA + H2O = an N-acyl-L-amino acid + a tRNA + H(+). In terms of biological role, hydrolyzes ribosome-free peptidyl-tRNAs (with 1 or more amino acids incorporated), which drop off the ribosome during protein synthesis, or as a result of ribosome stalling. Its function is as follows. Catalyzes the release of premature peptidyl moieties from peptidyl-tRNA molecules trapped in stalled 50S ribosomal subunits, and thus maintains levels of free tRNAs and 50S ribosomes. The protein is Peptidyl-tRNA hydrolase of Streptococcus agalactiae serotype Ia (strain ATCC 27591 / A909 / CDC SS700).